The sequence spans 251 residues: Precorrin-4 C(11)-methyltransferase (251 aa).

It belongs to the precorrin methyltransferase family.

The enzyme catalyses precorrin-4 + S-adenosyl-L-methionine = precorrin-5 + S-adenosyl-L-homocysteine. It participates in cofactor biosynthesis; adenosylcobalamin biosynthesis; cob(II)yrinate a,c-diamide from precorrin-2 (aerobic route): step 4/10. Catalyzes the methylation of C-11 in precorrin-4 to form precorrin-5. The chain is Precorrin-4 C(11)-methyltransferase (cobM) from Mycobacterium tuberculosis (strain CDC 1551 / Oshkosh).